The primary structure comprises 95 residues: MNPKHWGRAVWTIIFIVLSQAGLDGNIEACKRKLYTIVSTLPCPACRRHATIAIEDNNVMSSDDLNYIYYFFIRLFNNLAFDPKYAIDVSKVKPL.

Residues 1 to 8 are Intravirion-facing; sequence MNPKHWGR. Positions 1–95 constitute an ERV/ALR sulfhydryl oxidase domain; the sequence is MNPKHWGRAV…AIDVSKVKPL (95 aa). The chain crosses the membrane as a helical span at residues 9–25; it reads AVWTIIFIVLSQAGLDG. Residues 26 to 95 are Virion surface-facing; the sequence is NIEACKRKLY…AIDVSKVKPL (70 aa). A disulfide bridge links cysteine 43 with cysteine 46.

The protein belongs to the orthopoxvirus OPG072 family. In terms of assembly, interacts with OPG128; this interaction involves formation of a transient disulfide-bonded intermediate, allowing disulfide bond transfer. Requires FAD as cofactor.

It is found in the virion membrane. The protein localises to the host cytoplasm. The catalysed reaction is 2 R'C(R)SH + O2 = R'C(R)S-S(R)CR' + H2O2. In terms of biological role, FAD-dependent sulfhydryl oxidase that catalyzes disulfide bond formation. The complete pathway for formation of disulfide bonds in intracellular virion membrane proteins sequentially involves thiol-disulfide transfer between OPG072, OPG128 and OPG088. This Monkeypox virus protein is Probable FAD-linked sulfhydryl oxidase OPG072 (OPG072).